The sequence spans 364 residues: Ribosomal RNA large subunit methyltransferase F (364 aa).

The tract at residues methionine 1–leucine 28 is disordered.

This sequence belongs to the methyltransferase superfamily. METTL16/RlmF family.

It localises to the cytoplasm. It carries out the reaction adenosine(1618) in 23S rRNA + S-adenosyl-L-methionine = N(6)-methyladenosine(1618) in 23S rRNA + S-adenosyl-L-homocysteine + H(+). Specifically methylates the adenine in position 1618 of 23S rRNA. This chain is Ribosomal RNA large subunit methyltransferase F, found in Vibrio vulnificus (strain YJ016).